A 362-amino-acid chain; its full sequence is Serine/threonine-protein kinase ZRK4 (362 aa).

The interval 1-23 (MNDQKMSCWRKKSKKKNSEANQR) is disordered. The region spanning 35 to 362 (LEDLIELCNG…KELKRIERWT (328 aa)) is the Protein kinase domain. ATP is bound by residues 41 to 49 (LCNGKSNPI) and K89. D185 (proton acceptor) is an active-site residue.

It belongs to the protein kinase superfamily. Ser/Thr protein kinase family. ZRK subfamily.

It catalyses the reaction L-seryl-[protein] + ATP = O-phospho-L-seryl-[protein] + ADP + H(+). The catalysed reaction is L-threonyl-[protein] + ATP = O-phospho-L-threonyl-[protein] + ADP + H(+). This is Serine/threonine-protein kinase ZRK4 from Arabidopsis thaliana (Mouse-ear cress).